A 308-amino-acid chain; its full sequence is 1D-myo-inositol 2-acetamido-2-deoxy-alpha-D-glucopyranoside deacetylase (308 aa).

The Zn(2+) site is built by histidine 13, aspartate 16, and histidine 147.

It belongs to the MshB deacetylase family. Requires Zn(2+) as cofactor.

The catalysed reaction is 1D-myo-inositol 2-acetamido-2-deoxy-alpha-D-glucopyranoside + H2O = 1D-myo-inositol 2-amino-2-deoxy-alpha-D-glucopyranoside + acetate. In terms of biological role, catalyzes the deacetylation of 1D-myo-inositol 2-acetamido-2-deoxy-alpha-D-glucopyranoside (GlcNAc-Ins) in the mycothiol biosynthesis pathway. In Mycobacterium leprae (strain Br4923), this protein is 1D-myo-inositol 2-acetamido-2-deoxy-alpha-D-glucopyranoside deacetylase.